A 261-amino-acid chain; its full sequence is 3-methyl-2-oxobutanoate hydroxymethyltransferase (261 aa).

Mg(2+) contacts are provided by Asp44 and Asp83. 3-methyl-2-oxobutanoate-binding positions include 44 to 45, Asp83, and Lys113; that span reads DS. Residue Glu115 participates in Mg(2+) binding. Catalysis depends on Glu183, which acts as the Proton acceptor.

It belongs to the PanB family. As to quaternary structure, homodecamer; pentamer of dimers. Mg(2+) serves as cofactor.

It localises to the cytoplasm. It catalyses the reaction 3-methyl-2-oxobutanoate + (6R)-5,10-methylene-5,6,7,8-tetrahydrofolate + H2O = 2-dehydropantoate + (6S)-5,6,7,8-tetrahydrofolate. It participates in cofactor biosynthesis; (R)-pantothenate biosynthesis; (R)-pantoate from 3-methyl-2-oxobutanoate: step 1/2. Catalyzes the reversible reaction in which hydroxymethyl group from 5,10-methylenetetrahydrofolate is transferred onto alpha-ketoisovalerate to form ketopantoate. This chain is 3-methyl-2-oxobutanoate hydroxymethyltransferase, found in Cyanothece sp. (strain PCC 7425 / ATCC 29141).